We begin with the raw amino-acid sequence, 162 residues long: Peptide deformylase-like (162 aa).

The protein belongs to the polypeptide deformylase family.

The chain is Peptide deformylase-like from Staphylococcus aureus (strain COL).